We begin with the raw amino-acid sequence, 140 residues long: Large ribosomal subunit protein uL14 (140 aa).

This sequence belongs to the universal ribosomal protein uL14 family. Part of the 50S ribosomal subunit. Forms a cluster with proteins L3 and L24e, part of which may contact the 16S rRNA in 2 intersubunit bridges.

Binds to 23S rRNA. Forms part of two intersubunit bridges in the 70S ribosome. This Aeropyrum pernix (strain ATCC 700893 / DSM 11879 / JCM 9820 / NBRC 100138 / K1) protein is Large ribosomal subunit protein uL14.